The sequence spans 309 residues: Aspartate carbamoyltransferase catalytic subunit (309 aa).

Carbamoyl phosphate contacts are provided by arginine 57 and threonine 58. An L-aspartate-binding site is contributed by lysine 86. Arginine 107, histidine 135, and glutamine 138 together coordinate carbamoyl phosphate. Positions 168 and 228 each coordinate L-aspartate. Leucine 267 and proline 268 together coordinate carbamoyl phosphate.

The protein belongs to the aspartate/ornithine carbamoyltransferase superfamily. ATCase family. As to quaternary structure, heterooligomer of catalytic and regulatory chains.

The catalysed reaction is carbamoyl phosphate + L-aspartate = N-carbamoyl-L-aspartate + phosphate + H(+). It functions in the pathway pyrimidine metabolism; UMP biosynthesis via de novo pathway; (S)-dihydroorotate from bicarbonate: step 2/3. Functionally, catalyzes the condensation of carbamoyl phosphate and aspartate to form carbamoyl aspartate and inorganic phosphate, the committed step in the de novo pyrimidine nucleotide biosynthesis pathway. This chain is Aspartate carbamoyltransferase catalytic subunit, found in Cenarchaeum symbiosum (strain A).